A 70-amino-acid chain; its full sequence is Large ribosomal subunit protein bL31 (70 aa).

Residues Cys16, Cys18, Cys37, and Cys40 each contribute to the Zn(2+) site.

This sequence belongs to the bacterial ribosomal protein bL31 family. Type A subfamily. As to quaternary structure, part of the 50S ribosomal subunit. Zn(2+) is required as a cofactor.

Its function is as follows. Binds the 23S rRNA. The sequence is that of Large ribosomal subunit protein bL31 from Shewanella sp. (strain MR-4).